The following is an 837-amino-acid chain: V-type proton ATPase 116 kDa subunit a 1 (837 aa).

The Cytoplasmic portion of the chain corresponds to Met1–Glu388. Phosphothreonine occurs at positions 250 and 360. At Tyr364 the chain carries Phosphotyrosine. The helical transmembrane segment at Ile389–Phe407 threads the bilayer. The Vacuolar portion of the chain corresponds to Gly408–Asp409. The chain crosses the membrane as a helical span at residues Phe410–Arg426. Over Glu427–Ser441 the chain is Cytoplasmic. Residues Thr442–Ser471 form a helical membrane-spanning segment. The Vacuolar portion of the chain corresponds to Leu472–Ser534. Asn488 is a glycosylation site (N-linked (GalNAc...) asparagine). The helical transmembrane segment at Phe535–Leu554 threads the bilayer. At Ser555 to Phe572 the chain is on the cytoplasmic side. The chain crosses the membrane as a helical span at residues Ile573–Lys593. Over Trp594–Phe638 the chain is Vacuolar. Residues Leu639 to Leu658 traverse the membrane as a helical segment. The Cytoplasmic segment spans residues Arg659–Thr724. Residues Ile725–Ala749 form a helical membrane-spanning segment. Over Gln750–Ala770 the chain is Vacuolar. A helical transmembrane segment spans residues Gly771–Glu809. At Phe810–Glu837 the chain is on the cytoplasmic side.

Belongs to the V-ATPase 116 kDa subunit family. As to quaternary structure, V-ATPase is a heteromultimeric enzyme made up of two complexes: the ATP-hydrolytic V1 complex and the proton translocation V0 complex. The V1 complex consists of three catalytic AB heterodimers that form a heterohexamer, three peripheral stalks each consisting of EG heterodimers, one central rotor including subunits D and F, and the regulatory subunits C and H. The proton translocation complex V0 consists of the proton transport subunit a, a ring of proteolipid subunits c9c'', rotary subunit d, subunits e and f, and the accessory subunits ATP6AP1/Ac45 and ATP6AP2/PRR. Interacts with SPAAR.

The protein localises to the cytoplasmic vesicle. Its subcellular location is the clathrin-coated vesicle membrane. It localises to the secretory vesicle. It is found in the synaptic vesicle membrane. The protein resides in the melanosome. In terms of biological role, subunit of the V0 complex of vacuolar(H+)-ATPase (V-ATPase), a multisubunit enzyme composed of a peripheral complex (V1) that hydrolyzes ATP and a membrane integral complex (V0) that transports protons across cellular membranes. V-ATPase is responsible for the acidification of various organelles, such as lysosomes, endosomes, the trans-Golgi network, and secretory granules, including synaptic vesicles. In certain cell types, can be exported to the plasma membrane, where it is involved in the acidification of the extracellular environment. Required for assembly and activity of the vacuolar ATPase. Through its action on compartment acidification, plays an essential role in neuronal development in terms of integrity and connectivity of neurons. The polypeptide is V-type proton ATPase 116 kDa subunit a 1 (ATP6V0A1) (Homo sapiens (Human)).